A 548-amino-acid polypeptide reads, in one-letter code: Thermolysin (548 aa).

The first 28 residues, 1–28 (MKMKMKLASFGLAAGLAAQVFLPYNALA), serve as a signal peptide directing secretion. Positions 29–232 (STEHVTWNQQ…DAAKPGDVKS (204 aa)) are cleaved as a propeptide — activation peptide. D289, D291, Q293, and D370 together coordinate Ca(2+). H374 contributes to the Zn(2+) binding site. The active site involves E375. Residues H378 and E398 each contribute to the Zn(2+) site. Ca(2+) contacts are provided by E409, N415, D417, E419, E422, Y425, T426, I429, and D432. Catalysis depends on H463, which acts as the Proton donor.

It belongs to the peptidase M4 family. The cofactor is Ca(2+). Requires Zn(2+) as cofactor.

It is found in the secreted. The enzyme catalyses Preferential cleavage: Xaa-|-Leu &gt; Xaa-|-Phe.. Its function is as follows. Extracellular zinc metalloprotease. This chain is Thermolysin (npr), found in Bacillus thermoproteolyticus.